A 746-amino-acid polypeptide reads, in one-letter code: Exostosin-1 (746 aa).

Residues M1–Y7 lie on the Cytoplasmic side of the membrane. The helical; Signal-anchor for type II membrane protein transmembrane segment at F8–F28 threads the bilayer. At R29–L746 the chain is on the lumenal side. A glycan (N-linked (GlcNAc...) asparagine) is linked at N89. 2 disulfide bridges follow: C98–C103 and C109–C152. Residues L166 and Y203 each contribute to the a protein site. Residues K267, K269, Y271, and R280 each contribute to the UDP site. A disulfide bond links C298 and C312. Position 300 (H300) interacts with a protein. UDP contacts are provided by Y319 and Y324. Residue N330 is glycosylated (N-linked (GlcNAc...) asparagine). 2 disulfide bridges follow: C334–C355 and C652–C704. UDP is bound by residues R346 and E349.

Belongs to the glycosyltransferase 47 family. As to quaternary structure, part of the heparan sulfate polymerase, a dimeric complex composed of EXT1 and EXT2. Could also form homooligomeric complexes. Interacts with NDST1. In terms of processing, N-glycosylated.

Its subcellular location is the golgi apparatus membrane. The protein localises to the golgi apparatus. The protein resides in the cis-Golgi network membrane. It is found in the endoplasmic reticulum membrane. The catalysed reaction is 3-O-{alpha-D-GlcNAc-[(1-&gt;4)-beta-D-GlcA-(1-&gt;4)-alpha-D-GlcNAc](n)-(1-&gt;4)-beta-D-GlcA-(1-&gt;3)-beta-D-Gal-(1-&gt;3)-beta-D-Gal-(1-&gt;4)-beta-D-Xyl}-L-seryl-[protein] + UDP-alpha-D-glucuronate = 3-O-{[(1-&gt;4)-beta-D-GlcA-(1-&gt;4)-alpha-D-GlcNAc](n+1)-(1-&gt;4)-beta-D-GlcA-(1-&gt;3)-beta-D-Gal-(1-&gt;3)-beta-D-Gal-(1-&gt;4)-beta-D-Xyl}-L-seryl-[protein] + UDP + H(+). It participates in protein modification; protein glycosylation. Its function is as follows. Glycosyltransferase forming with EXT2 the heterodimeric heparan sulfate polymerase which catalyzes the elongation of the heparan sulfate glycan backbone. Glycan backbone extension consists in the alternating transfer of (1-&gt;4)-beta-D-GlcA and (1-&gt;4)-alpha-D-GlcNAc residues from their respective UDP-sugar donors. Both EXT1 and EXT2 are required for the full activity of the polymerase since EXT1 bears the N-acetylglucosaminyl-proteoglycan 4-beta-glucuronosyltransferase activity within the complex while EXT2 carries the glucuronosyl-N-acetylglucosaminyl-proteoglycan 4-alpha-N-acetylglucosaminyltransferase activity. Heparan sulfate proteoglycans are ubiquitous components of the extracellular matrix and play an important role in tissue homeostasis and signaling. In Mus musculus (Mouse), this protein is Exostosin-1.